Consider the following 237-residue polypeptide: Uridylate kinase (237 aa).

9 to 12 (KLSG) serves as a coordination point for ATP. Glycine 51 lines the UMP pocket. 2 residues coordinate ATP: glycine 52 and arginine 56. UMP contacts are provided by residues aspartate 71 and 132–139 (CGNPFFTT). ATP contacts are provided by threonine 159, tyrosine 165, and aspartate 168.

This sequence belongs to the UMP kinase family. Homohexamer.

The protein resides in the cytoplasm. The enzyme catalyses UMP + ATP = UDP + ADP. Its pathway is pyrimidine metabolism; CTP biosynthesis via de novo pathway; UDP from UMP (UMPK route): step 1/1. Its activity is regulated as follows. Inhibited by UTP. In terms of biological role, catalyzes the reversible phosphorylation of UMP to UDP. This is Uridylate kinase from Prochlorococcus marinus (strain MIT 9303).